We begin with the raw amino-acid sequence, 219 residues long: Proteasome subunit beta type-9 (219 aa).

The propeptide at 1–20 is removed in mature form; it reads MLRAGAPTAGSFRTKEVHTG. The Nucleophile role is filled by T21. N6-acetyllysine occurs at positions 53 and 109.

It belongs to the peptidase T1B family. As to quaternary structure, the 26S proteasome consists of a 20S proteasome core and two 19S regulatory subunits. The 20S proteasome core is composed of 28 subunits that are arranged in four stacked rings, resulting in a barrel-shaped structure. The two end rings are each formed by seven alpha subunits, and the two central rings are each formed by seven beta subunits. The catalytic chamber with the active sites is on the inside of the barrel. Component of the immunoproteasome, where it displaces the equivalent housekeeping subunit PSMB6. Component of the spermatoproteasome, a form of the proteasome specifically found in testis. In terms of processing, autocleaved. The resulting N-terminal Thr residue of the mature subunit is responsible for the nucleophile proteolytic activity.

It is found in the cytoplasm. Its subcellular location is the nucleus. It carries out the reaction Cleavage of peptide bonds with very broad specificity.. Functionally, the proteasome is a multicatalytic proteinase complex which is characterized by its ability to cleave peptides with Arg, Phe, Tyr, Leu, and Glu adjacent to the leaving group at neutral or slightly basic pH. The proteasome has an ATP-dependent proteolytic activity. This subunit is involved in antigen processing to generate class I binding peptides. The sequence is that of Proteasome subunit beta type-9 (Psmb9) from Mus platythrix (Flat-haired mouse).